Reading from the N-terminus, the 132-residue chain is uncharacterized protein (132 aa).

Disordered stretches follow at residues 36 to 69 (GLASTPSLRPRPRPWEGQLQHQSHQGSLDKPNIS) and 97 to 132 (QINDSDNDNDDNNNDNNKGDGNDDDNNTVTANPTAR). The residue at position 101 (S101) is a Phosphoserine.

In terms of assembly, copurifies with proteins HOL1, MMP1, PEX7 and PLB1.

This is an uncharacterized protein from Saccharomyces cerevisiae (strain ATCC 204508 / S288c) (Baker's yeast).